A 2359-amino-acid polypeptide reads, in one-letter code: Low-reducing polyketide synthase drtA (2359 aa).

A Ketosynthase family 3 (KS3) domain is found at L17–E444. Active-site for beta-ketoacyl synthase activity residues include C190, H327, and H367. A malonyl-CoA:ACP transacylase (MAT) domain region spans residues V556–K868. Residue S648 is the For malonyltransferase activity of the active site. The N-terminal hotdog fold stretch occupies residues H940–A1077. The tract at residues H940–N1245 is dehydratase (DH) domain. The PKS/mFAS DH domain occupies H940–V1250. The active-site Proton acceptor; for dehydratase activity is H972. The C-terminal hotdog fold stretch occupies residues A1089–V1250. The active-site Proton donor; for dehydratase activity is D1153. An enoyl reductase (ER) domain region spans residues G1659–V1970. Positions S1995–D2172 are ketoreductase (KR) domain. The Carrier domain maps to A2280 to L2356. S2316 is subject to O-(pantetheine 4'-phosphoryl)serine.

It functions in the pathway secondary metabolite biosynthesis; terpenoid biosynthesis. Functionally, low-reducing polyketide synthase; part of the gene cluster that mediates the biosynthesis of various drimane-type sesquiterpene esters, compounds that exhibit diverse biological activities and are widely present in eukaryotes. The pathway begins with the synthesis of the backbone drimenol by the terpene cyclase drtB using farnesyl pyrophosphate (FPP) as substrate. The cytochrome P450 monooxygenase drtD is then responsible for the hydroxylations at C-6, C-9 and C-12, as well as the oxidation of hydroxyl groups at C-6 and C-11 to a ketone and an aldehyde, respectively. Then, the biosynthesis can go in two directions, either the hydroxylated drimenol is further hydroxylated at C-2 and C-3 by an enzyme(s) not associated with the drt cluster, or the FAD-binding oxidoreductase drtC further oxidizes C-11 or C-12 to form the butyrolactone ring. DrtB, drtD and drtC are solely responsible for the formation of the different drimane structures observed during drimane sesquiterpenes biosynthesis. The polyketide synthase drtA synthesizes different lengths (C6 and C8) of PKS chains, which are then oxidized to varying degrees by the short-chain dehydrogenase drtF. Finally, these PKS chains are transferred onto drimane sesquiterpenes by the acyltransferase drtE, forming the sesquiterpene esters. In addition to the different fatty acyl-CoA chains produced by drtA, drtE is also able to use cinnamoyl-CoA as a substrate. This is Low-reducing polyketide synthase drtA from Aspergillus calidoustus.